Reading from the N-terminus, the 533-residue chain is MPMTMSQAFIGNFLGNSPKWYKIAILSFLIINPILFFYVSPFVAGWVLVLEFIFTLAMALKCYPLQPGGLLAIEAVAIGMTSASQVLHEIEANLEVLLLLVFMVAGIYFMKQLLLFVFTKMITKVRSKILVSLLFCLASAFLSAFLDALTVIAVIITVAVGFYSIYHKVASGKDFSADHDHTSEGKNDDGENQLNEDELESFRGFLRNLLMHAGVGTALGGVCTMVGEPQNLIIAAQANWQFGEFAIRMSPVTVPVLFAGILTCFIVEKFRWFGYGAQLPDAVHKILCDYAAYEDARRTNKDKMKLVIQAFVGVWLIAGLALHLASVGLIGLSVIILTTAFNGITDEHALGKAFEEALPFTALLAVFFAVVAVIIDQQLFGPVIQWALNHEGNTQLVIFYIANGLLSMVSDNVFVGTVYINEVKAALINGQITRDQFDLLAVAINTGTNLPSVATPNGQAAFLFLLTSALAPLIRLSYGRMVWMALPYTIVLSIVGVMAIQSGFLEQMTQYFYDSHAILHHSVKEALAPAAAH.

The next 11 membrane-spanning stretches (helical) occupy residues 10-30 (IGNF…SFLI), 67-87 (PGGL…SQVL), 98-118 (LLLV…LFVF), 131-165 (VSLL…FYSI), 209-229 (LLMH…VGEP), 247-267 (IRMS…CFIV), 310-330 (AFVG…VGLI), 355-375 (EEAL…AVII), 396-416 (LVIF…VFVG), 454-474 (ATPN…APLI), and 481-501 (MVWM…MAIQ).

The protein belongs to the NhaB Na(+)/H(+) (TC 2.A.34) antiporter family.

The protein resides in the cell inner membrane. It catalyses the reaction 2 Na(+)(in) + 3 H(+)(out) = 2 Na(+)(out) + 3 H(+)(in). Na(+)/H(+) antiporter that extrudes sodium in exchange for external protons. The protein is Na(+)/H(+) antiporter NhaB of Shewanella sp. (strain ANA-3).